The following is a 50-amino-acid chain: MPQRTFLMMLIVVCVTILCFVWMVRDSLCGFRIEQGNTVLVATLAYEVKR.

A helical membrane pass occupies residues Thr-5 to Arg-25.

It belongs to the Hok/Gef family.

The protein resides in the cell inner membrane. Functionally, when overexpressed kill the cells from the inside by interfering with a vital function in the cell membrane. In terms of biological role, toxic component of a type I toxin-antitoxin (TA) system. When expressed is involved in cellular Mg(2+) release and degradation of stable RNA. This is Protein PndA (pndA) from Escherichia coli.